Reading from the N-terminus, the 176-residue chain is Peptide deformylase (176 aa).

2 residues coordinate Fe cation: Cys95 and His137. Glu138 is an active-site residue. A Fe cation-binding site is contributed by His141.

It belongs to the polypeptide deformylase family. The cofactor is Fe(2+).

The catalysed reaction is N-terminal N-formyl-L-methionyl-[peptide] + H2O = N-terminal L-methionyl-[peptide] + formate. In terms of biological role, removes the formyl group from the N-terminal Met of newly synthesized proteins. Requires at least a dipeptide for an efficient rate of reaction. N-terminal L-methionine is a prerequisite for activity but the enzyme has broad specificity at other positions. In Hyphomonas neptunium (strain ATCC 15444), this protein is Peptide deformylase.